The sequence spans 213 residues: Uridine kinase (213 aa).

15 to 22 lines the ATP pocket; that stretch reads GASASGKS.

Belongs to the uridine kinase family.

The protein resides in the cytoplasm. It catalyses the reaction uridine + ATP = UMP + ADP + H(+). The catalysed reaction is cytidine + ATP = CMP + ADP + H(+). Its pathway is pyrimidine metabolism; CTP biosynthesis via salvage pathway; CTP from cytidine: step 1/3. It functions in the pathway pyrimidine metabolism; UMP biosynthesis via salvage pathway; UMP from uridine: step 1/1. This Proteus mirabilis (strain HI4320) protein is Uridine kinase.